The primary structure comprises 471 residues: Trigger factor (471 aa).

The PPIase FKBP-type domain occupies 174–261; sequence GDVAVVSFEG…VKDLKTRELP (88 aa). Residues 436–446 show a composition bias toward polar residues; the sequence is ETLPKTKSLNG. The interval 436-471 is disordered; sequence ETLPKTKSLNGKPSTQGKTSQSKSKKTKTKVEKTTK. Over residues 447–457 the composition is skewed to low complexity; it reads KPSTQGKTSQS.

The protein belongs to the FKBP-type PPIase family. Tig subfamily.

Its subcellular location is the cytoplasm. It carries out the reaction [protein]-peptidylproline (omega=180) = [protein]-peptidylproline (omega=0). Its function is as follows. Involved in protein export. Acts as a chaperone by maintaining the newly synthesized protein in an open conformation. Functions as a peptidyl-prolyl cis-trans isomerase. The protein is Trigger factor of Prochlorococcus marinus (strain MIT 9211).